Consider the following 332-residue polypeptide: Cysteine and histidine-rich domain-containing protein 1 (332 aa).

The residue at position 2 (A2) is an N-acetylalanine. An interaction with PPP5C region spans residues A2–V77. The Zn(2+) site is built by C5, C10, C24, H27, C42, and C43. 2 CHORD domains span residues C5 to H64 and C157 to H216. Residue T47 is modified to Phosphothreonine. S51 is modified (phosphoserine). Positions 59, 64, 157, 162, 176, 179, 194, 195, 211, and 216 each coordinate Zn(2+). The segment at G62–K82 is disordered. Positions H64–K82 are enriched in basic and acidic residues. The interaction with HSP90AA1 and HSP90AB1 stretch occupies residues N65–E316. A CS domain is found at V227–E316.

As to quaternary structure, interacts with HSP90AA1, HSP90AB1, PPP5C, ROCK1 and ROCK2.

Its function is as follows. Regulates centrosome duplication, probably by inhibiting the kinase activity of ROCK2. Proposed to act as co-chaperone for HSP90. May play a role in the regulation of NOD1 via a HSP90 chaperone complex. In vitro, has intrinsic chaperone activity. This function may be achieved by inhibiting association of ROCK2 with NPM1. Plays a role in ensuring the localization of the tyrosine kinase receptor EGFR to the plasma membrane, and thus ensures the subsequent regulation of EGFR activity and EGF-induced actin cytoskeleton remodeling. Involved in stress response. Prevents tumorigenesis. The polypeptide is Cysteine and histidine-rich domain-containing protein 1 (CHORDC1) (Bos taurus (Bovine)).